The sequence spans 229 residues: MVHPYLFLQFFRKLLEPLHISEAGADAIAYTWLIIALLLILSMLATKGLKTVPGGLQNFMEVIIGGVENMVVETMGHHGKPFFPLIATLAIFILVSNLIGLVPGFFPPTANINTTAACAVIVFVTTHVVGIKEHGFKYIKHFLGPILWLAPMMFFIEVIGHFSRVISLTLRLFGNMNGHELVLMIFFGLAPFLVPLPMMLMGVLVSFIQAFVFMLLAMIYIQGSLEEGH.

6 helical membrane passes run Ala25–Ala45, Phe82–Val102, Gly104–Val124, Phe142–Phe162, Leu181–Met201, and Gly202–Gln222.

Belongs to the ATPase A chain family. As to quaternary structure, F-type ATPases have 2 components, CF(1) - the catalytic core - and CF(0) - the membrane proton channel. CF(1) has five subunits: alpha(3), beta(3), gamma(1), delta(1), epsilon(1). CF(0) has three main subunits: a(1), b(2) and c(9-12). The alpha and beta chains form an alternating ring which encloses part of the gamma chain. CF(1) is attached to CF(0) by a central stalk formed by the gamma and epsilon chains, while a peripheral stalk is formed by the delta and b chains.

It is found in the cell inner membrane. Functionally, key component of the proton channel; it plays a direct role in the translocation of protons across the membrane. This chain is ATP synthase subunit a, found in Geotalea uraniireducens (strain Rf4) (Geobacter uraniireducens).